Consider the following 194-residue polypeptide: Putative manganese efflux pump MntP (194 aa).

Helical transmembrane passes span 2–22 (TPGA…AAAV), 40–60 (FVFG…GLVA), 67–87 (VDHW…IWEA), 107–129 (ALIA…LAFI), 133–155 (IWVI…MLIG), and 168–188 (LIGG…HTGV).

Belongs to the MntP (TC 9.B.29) family.

It is found in the cell inner membrane. Its function is as follows. Probably functions as a manganese efflux pump. This chain is Putative manganese efflux pump MntP, found in Rhodopseudomonas palustris (strain BisA53).